Reading from the N-terminus, the 421-residue chain is 3-phosphoshikimate 1-carboxyvinyltransferase (421 aa).

3-phosphoshikimate-binding residues include K19, S20, and R24. K19 serves as a coordination point for phosphoenolpyruvate. Residues G88 and R116 each coordinate phosphoenolpyruvate. 3-phosphoshikimate-binding residues include S160, Q162, D307, and K334. Residue Q162 coordinates phosphoenolpyruvate. D307 (proton acceptor) is an active-site residue. 2 residues coordinate phosphoenolpyruvate: R338 and R380.

This sequence belongs to the EPSP synthase family. Monomer.

It is found in the cytoplasm. It catalyses the reaction 3-phosphoshikimate + phosphoenolpyruvate = 5-O-(1-carboxyvinyl)-3-phosphoshikimate + phosphate. It participates in metabolic intermediate biosynthesis; chorismate biosynthesis; chorismate from D-erythrose 4-phosphate and phosphoenolpyruvate: step 6/7. Its function is as follows. Catalyzes the transfer of the enolpyruvyl moiety of phosphoenolpyruvate (PEP) to the 5-hydroxyl of shikimate-3-phosphate (S3P) to produce enolpyruvyl shikimate-3-phosphate and inorganic phosphate. The sequence is that of 3-phosphoshikimate 1-carboxyvinyltransferase from Thermotoga neapolitana (strain ATCC 49049 / DSM 4359 / NBRC 107923 / NS-E).